The following is a 177-amino-acid chain: ATP synthase subunit delta (177 aa).

This sequence belongs to the ATPase delta chain family. F-type ATPases have 2 components, F(1) - the catalytic core - and F(0) - the membrane proton channel. F(1) has five subunits: alpha(3), beta(3), gamma(1), delta(1), epsilon(1). F(0) has three main subunits: a(1), b(2) and c(10-14). The alpha and beta chains form an alternating ring which encloses part of the gamma chain. F(1) is attached to F(0) by a central stalk formed by the gamma and epsilon chains, while a peripheral stalk is formed by the delta and b chains.

The protein resides in the cell inner membrane. Functionally, f(1)F(0) ATP synthase produces ATP from ADP in the presence of a proton or sodium gradient. F-type ATPases consist of two structural domains, F(1) containing the extramembraneous catalytic core and F(0) containing the membrane proton channel, linked together by a central stalk and a peripheral stalk. During catalysis, ATP synthesis in the catalytic domain of F(1) is coupled via a rotary mechanism of the central stalk subunits to proton translocation. In terms of biological role, this protein is part of the stalk that links CF(0) to CF(1). It either transmits conformational changes from CF(0) to CF(1) or is implicated in proton conduction. The sequence is that of ATP synthase subunit delta from Neisseria gonorrhoeae (strain NCCP11945).